A 223-amino-acid chain; its full sequence is Cuticular glutathione peroxidase (223 aa).

The first 19 residues, 1–19, serve as a signal peptide directing secretion; the sequence is MSAQLLILSHMVLLQLIVA. Asparagine 39 carries N-linked (GlcNAc...) asparagine glycosylation. Cysteine 74 is a catalytic residue. The N-linked (GlcNAc...) asparagine glycan is linked to asparagine 92.

Belongs to the glutathione peroxidase family. In terms of assembly, homotetramer.

The protein localises to the secreted. It carries out the reaction 2 glutathione + H2O2 = glutathione disulfide + 2 H2O. Its function is as follows. Could inhibit the oxidative burst of leukocytes and neutralize the secondary products of lipid peroxidation, thus providing the resistance of these parasites to immune effector mechanisms and their persistence in the mammalian host. It may also be involved in the formation of cross-linking residues such as dityrosine, trityrosine and isotrityrosine identified in cuticular collagen. Highly cross-linked external cortex may also serve to protect the parasite from immune attack. The polypeptide is Cuticular glutathione peroxidase (Brugia malayi (Filarial nematode worm)).